A 309-amino-acid chain; its full sequence is Elongation factor Ts (309 aa).

Positions 80–83 (TDFV) are involved in Mg(2+) ion dislocation from EF-Tu.

Belongs to the EF-Ts family.

It is found in the cytoplasm. In terms of biological role, associates with the EF-Tu.GDP complex and induces the exchange of GDP to GTP. It remains bound to the aminoacyl-tRNA.EF-Tu.GTP complex up to the GTP hydrolysis stage on the ribosome. The chain is Elongation factor Ts from Rhodospirillum rubrum (strain ATCC 11170 / ATH 1.1.1 / DSM 467 / LMG 4362 / NCIMB 8255 / S1).